A 162-amino-acid polypeptide reads, in one-letter code: Disulfide bond formation protein B (162 aa).

The Cytoplasmic segment spans residues 1 to 8; sequence MTPLFRKA. The chain crosses the membrane as a helical span at residues 9-25; the sequence is VWLLFAVSVCAFAGSLA. The Periplasmic segment spans residues 26–43; that stretch reads AQYVLGMEPCVLCISQRL. The cysteines at positions 35 and 38 are disulfide-linked. The helical transmembrane segment at 44-60 threads the bilayer; that stretch reads CVLATALCTAIVLMCRP. The Cytoplasmic segment spans residues 61-67; that stretch reads RRRAGGL. A helical membrane pass occupies residues 68–85; the sequence is FGAVFISIPAVTGISVAA. At 86-141 the chain is on the periplasmic side; it reads YQLWLQSLPPGTAPSCGAPWTFRLKGWSLFDWFEPVVRGFGNCAEPDYLLGVALPV. Cysteine 101 and cysteine 128 form a disulfide bridge. A helical membrane pass occupies residues 142-160; sequence WSAAYFLAVVLTVWWAWAR. Over 161-162 the chain is Cytoplasmic; that stretch reads AK.

This sequence belongs to the DsbB family.

The protein localises to the cell inner membrane. Required for disulfide bond formation in some periplasmic proteins. Acts by oxidizing the DsbA protein. The sequence is that of Disulfide bond formation protein B from Neisseria meningitidis serogroup C / serotype 2a (strain ATCC 700532 / DSM 15464 / FAM18).